Here is a 139-residue protein sequence, read N- to C-terminus: Large ribosomal subunit protein uL16 (139 aa).

Belongs to the universal ribosomal protein uL16 family. In terms of assembly, part of the 50S ribosomal subunit.

Its function is as follows. Binds 23S rRNA and is also seen to make contacts with the A and possibly P site tRNAs. This Chlorobium phaeobacteroides (strain DSM 266 / SMG 266 / 2430) protein is Large ribosomal subunit protein uL16.